Consider the following 393-residue polypeptide: MKDSDSLLHVHPAYSLKQLTQYFLKLGALGFGGPIALVGYMHRDLVEERQWVSEAEYQEGLTLAQVAPGPLAAQLSFYLGYVHYGFLGSALVGLAFVLPSFLIVVALGWAYTLYGGLNWMQAVFYGVGAAVIGIIAISAYKLTRKTVGTSWLLWSIYLVNAATTIVTESERVELILGSGALVLLVKFPPKHWIKQNRLNSFIGLPLIPLFAAVPTATTSLLGQIALFFTQAGAFVFGSGLAIVPFLYGGVVKDFGWLNSQQFLDAVAVAMITPGPVVITTGFIGFLVAGFPGACVAAIAMFIPCYLLTVIPAPYFKKHGKNPKISTFVNGVTVAATGAIAGAVVVLGRQSLHDLPTFLIGLIALISSWKLGKKLPEPLIIVIAAIAGVIFWSK.

A run of 10 helical transmembrane segments spans residues 22–42 (YFLK…GYMH), 90–110 (ALVG…LGWA), 119–139 (WMQA…AISA), 146–166 (TVGT…TTIV), 201–221 (FIGL…TSLL), 231–251 (AGAF…GGVV), 261–281 (QFLD…ITTG), 282–302 (FIGF…AMFI), 327–347 (FVNG…VVLG), and 370–390 (LGKK…GVIF).

This sequence belongs to the chromate ion transporter (CHR) (TC 2.A.51) family.

The protein resides in the cell membrane. May function in the active transport of chromate into the cell under sulfur-deficient conditions. This chain is Probable chromate transport protein (srpC), found in Synechococcus elongatus (strain ATCC 33912 / PCC 7942 / FACHB-805) (Anacystis nidulans R2).